The primary structure comprises 421 residues: Serine hydroxymethyltransferase (421 aa).

(6S)-5,6,7,8-tetrahydrofolate-binding positions include leucine 121 and 125–127 (GHL). The residue at position 229 (lysine 229) is an N6-(pyridoxal phosphate)lysine.

It belongs to the SHMT family. Homodimer. Pyridoxal 5'-phosphate serves as cofactor.

The protein localises to the cytoplasm. The enzyme catalyses (6R)-5,10-methylene-5,6,7,8-tetrahydrofolate + glycine + H2O = (6S)-5,6,7,8-tetrahydrofolate + L-serine. Its pathway is one-carbon metabolism; tetrahydrofolate interconversion. It participates in amino-acid biosynthesis; glycine biosynthesis; glycine from L-serine: step 1/1. In terms of biological role, catalyzes the reversible interconversion of serine and glycine with tetrahydrofolate (THF) serving as the one-carbon carrier. This reaction serves as the major source of one-carbon groups required for the biosynthesis of purines, thymidylate, methionine, and other important biomolecules. Also exhibits THF-independent aldolase activity toward beta-hydroxyamino acids, producing glycine and aldehydes, via a retro-aldol mechanism. The chain is Serine hydroxymethyltransferase from Haemophilus influenzae (strain PittEE).